Here is a 305-residue protein sequence, read N- to C-terminus: MIRQRTLKEIVKTTGVGLHSGRKVTLTLRPAAANTGIIYRRTDVNPPVDFPADPASVRDTMLCTALVNDQGVRISTVEHLNAALAGMGIDNAIIEVDAPEIPIMDGSASPFVYLLQQAGIQTLNAPKRFIRIKKPVRIEDGDKWAEFVPFNGFRMDFEIEFNHPAIDGDDQRLVFDFSSQGFVKEISRARTFGFMRDIEYLQSQNLCLGGSFDCAIVLDDYRILNEEGLRFDNEFVTHKVLDAIGDLYMAGHAIVGEFRAYKSGHGLNNQLLRAVLADQEAWEWATFEEEVGSPVAFAEPNMVLA.

Positions 79, 238, and 242 each coordinate Zn(2+). Catalysis depends on His265, which acts as the Proton donor.

The protein belongs to the LpxC family. The cofactor is Zn(2+).

The catalysed reaction is a UDP-3-O-[(3R)-3-hydroxyacyl]-N-acetyl-alpha-D-glucosamine + H2O = a UDP-3-O-[(3R)-3-hydroxyacyl]-alpha-D-glucosamine + acetate. It functions in the pathway glycolipid biosynthesis; lipid IV(A) biosynthesis; lipid IV(A) from (3R)-3-hydroxytetradecanoyl-[acyl-carrier-protein] and UDP-N-acetyl-alpha-D-glucosamine: step 2/6. In terms of biological role, catalyzes the hydrolysis of UDP-3-O-myristoyl-N-acetylglucosamine to form UDP-3-O-myristoylglucosamine and acetate, the committed step in lipid A biosynthesis. This is UDP-3-O-acyl-N-acetylglucosamine deacetylase from Vibrio cholerae serotype O1 (strain ATCC 39541 / Classical Ogawa 395 / O395).